Reading from the N-terminus, the 1154-residue chain is CRISPR-associated endoribonuclease Cas13a (1154 aa).

2 HEPN-like fold regions span residues 330–466 (TTSN…RFIN) and 923–1154 (FVHL…EMKK).

Belongs to the CRISPR-associated endoribonuclease Cas13a family. The cofactor is a divalent metal cation.

Target RNA acts as an activator for non-specific ssRNA degradation. In terms of biological role, CRISPR (clustered regularly interspaced short palindromic repeat), is an adaptive immune system that provides protection against mobile genetic elements (viruses, transposable elements and conjugative plasmids). CRISPR clusters contain sequences complementary to antecedent mobile elements and target invading nucleic acids. Unlike many single-component effectors, this CRISPR-Cas system targets RNA. CRISPR clusters are transcribed from pre-CRISPR RNA (crRNA) and processed into crRNA by this protein. Cleaves linear target ssRNA in a pre-crRNA-dependent fashion, preferentially before U residues. Binding a viable target RNA target activates this protein for non-specific RNA degradation in vitro (called collateral RNA degradation), which is fairly sensitive as it requires picomolar levels of viable target RNA. This Paludibacter propionicigenes (strain DSM 17365 / JCM 13257 / WB4) protein is CRISPR-associated endoribonuclease Cas13a.